The primary structure comprises 137 residues: Succinate dehydrogenase cytochrome b560 subunit (137 aa).

The next 2 helical transmembrane spans lie at 31–51 (AFLATMVLFSILFFKIGDLSL) and 60–80 (FFFLTFYLNWFIISLVNFTLL). Histidine 85 lines the heme pocket. A helical transmembrane segment spans residues 106-126 (VYTSGIIMLFCAAFLALLNII).

It belongs to the cytochrome b560 family. In terms of assembly, forms part of complex II containing four subunits: a 70 kDa flavoprotein (FP), a 27 kDa iron-sulfur protein (IP), a cytochrome B and a membrane-anchoring protein. Heme serves as cofactor.

It is found in the mitochondrion inner membrane. Its pathway is carbohydrate metabolism; tricarboxylic acid cycle. Functionally, membrane-anchoring subunit of succinate dehydrogenase (SDH) that is involved in complex II of the mitochondrial electron transport chain and is responsible for transferring electrons from succinate to ubiquinone (coenzyme Q). The sequence is that of Succinate dehydrogenase cytochrome b560 subunit (SDH3) from Marchantia polymorpha (Common liverwort).